The chain runs to 209 residues: Type III pantothenate kinase (209 aa).

An ATP-binding site is contributed by 5–12 (DIGNSNAN). Residues Tyr68 and 72–75 (GIDR) contribute to the substrate site. The Proton acceptor role is filled by Asp74. Asp89 is a binding site for K(+). Ser92 lines the ATP pocket. Substrate is bound at residue Thr144.

The protein belongs to the type III pantothenate kinase family. As to quaternary structure, homodimer. NH4(+) serves as cofactor. Requires K(+) as cofactor.

The protein localises to the cytoplasm. It carries out the reaction (R)-pantothenate + ATP = (R)-4'-phosphopantothenate + ADP + H(+). It participates in cofactor biosynthesis; coenzyme A biosynthesis; CoA from (R)-pantothenate: step 1/5. Functionally, catalyzes the phosphorylation of pantothenate (Pan), the first step in CoA biosynthesis. This Campylobacter jejuni subsp. jejuni serotype O:2 (strain ATCC 700819 / NCTC 11168) protein is Type III pantothenate kinase.